Here is a 306-residue protein sequence, read N- to C-terminus: UDP-3-O-acyl-N-acetylglucosamine deacetylase (306 aa).

His-79, His-238, and Asp-242 together coordinate Zn(2+). His-265 serves as the catalytic Proton donor.

Belongs to the LpxC family. It depends on Zn(2+) as a cofactor.

The enzyme catalyses a UDP-3-O-[(3R)-3-hydroxyacyl]-N-acetyl-alpha-D-glucosamine + H2O = a UDP-3-O-[(3R)-3-hydroxyacyl]-alpha-D-glucosamine + acetate. Its pathway is glycolipid biosynthesis; lipid IV(A) biosynthesis; lipid IV(A) from (3R)-3-hydroxytetradecanoyl-[acyl-carrier-protein] and UDP-N-acetyl-alpha-D-glucosamine: step 2/6. In terms of biological role, catalyzes the hydrolysis of UDP-3-O-myristoyl-N-acetylglucosamine to form UDP-3-O-myristoylglucosamine and acetate, the committed step in lipid A biosynthesis. This Shewanella baltica (strain OS223) protein is UDP-3-O-acyl-N-acetylglucosamine deacetylase.